A 333-amino-acid chain; its full sequence is UDP-3-O-acylglucosamine N-acyltransferase 2 (333 aa).

The Proton acceptor role is filled by His243.

This sequence belongs to the transferase hexapeptide repeat family. LpxD subfamily. In terms of assembly, homotrimer.

It carries out the reaction a UDP-3-O-[(3R)-3-hydroxyacyl]-alpha-D-glucosamine + a (3R)-hydroxyacyl-[ACP] = a UDP-2-N,3-O-bis[(3R)-3-hydroxyacyl]-alpha-D-glucosamine + holo-[ACP] + H(+). The protein operates within bacterial outer membrane biogenesis; LPS lipid A biosynthesis. Catalyzes the N-acylation of UDP-3-O-acylglucosamine using 3-hydroxyacyl-ACP as the acyl donor. Is involved in the biosynthesis of lipid A, a phosphorylated glycolipid that anchors the lipopolysaccharide to the outer membrane of the cell. The protein is UDP-3-O-acylglucosamine N-acyltransferase 2 of Koribacter versatilis (strain Ellin345).